A 321-amino-acid chain; its full sequence is D-alanine--D-alanine ligase (321 aa).

Positions 121 to 315 (RSWFLTNNIN…FTNLIEEIIK (195 aa)) constitute an ATP-grasp domain. 147-199 (PMKRPYVIKPLTQGSSIGVEVIFAEDNFNFADYDFPYGDQVIIEQYIKGRELQ) is an ATP binding site. Residues Glu-268, Glu-282, and Asn-284 each contribute to the Mg(2+) site.

This sequence belongs to the D-alanine--D-alanine ligase family. Requires Mg(2+) as cofactor. Mn(2+) serves as cofactor.

It localises to the cytoplasm. The enzyme catalyses 2 D-alanine + ATP = D-alanyl-D-alanine + ADP + phosphate + H(+). It functions in the pathway cell wall biogenesis; peptidoglycan biosynthesis. Its function is as follows. Cell wall formation. The chain is D-alanine--D-alanine ligase from Rickettsia massiliae (strain Mtu5).